The sequence spans 267 residues: MKKILLTNDDGYHAKGIKALEQALEEMAEIYVVAPKHEKSACSQCITITAPLRAEKIKGKEGRHYRIDDGTPSDCVYLAINELFKHVCFDLVISGINLGSNMGEDTIYSGTVAGAIEGTIQGVPSIAISQILSNKNKNTPLSFDLAQKIIQDLVQNIFTKGYPLKGRKLLNVNVPNCSLQEYQGERITPKGYRLYKKEVHKRTDPKNESYFWLGLHPLEWQKRENEDRLSDFDAIASNHVSITPLNLDLTSYDDLKSLESWHEGMLK.

Residues aspartate 9, aspartate 10, serine 40, and asparagine 97 each coordinate a divalent metal cation.

Belongs to the SurE nucleotidase family. The cofactor is a divalent metal cation.

It localises to the cytoplasm. The enzyme catalyses a ribonucleoside 5'-phosphate + H2O = a ribonucleoside + phosphate. Functionally, nucleotidase that shows phosphatase activity on nucleoside 5'-monophosphates. The protein is 5'-nucleotidase SurE of Helicobacter pylori (strain HPAG1).